The following is a 756-amino-acid chain: LIM domain and actin-binding protein 1 (756 aa).

The residue at position 1 (Met-1) is an N-acetylmethionine. Ser-15 and Ser-55 each carry phosphoserine. Residues 44-56 (AAEEANMEKRRSN) are compositionally biased toward basic and acidic residues. 2 disordered regions span residues 44 to 183 (AAEE…SNKI) and 204 to 377 (QTKI…AVKK). Low complexity predominate over residues 107-118 (EVASSSASGVEA). Ser-130 is modified (phosphoserine). Positions 140 to 173 (RIKDTEHLKDHSAESKKMENCLAESRHEVGKPET) are enriched in basic and acidic residues. The short motif at 164–166 (SRH) is the Required for interaction with NPC1L1 element. The residue at position 221 (Ser-221) is a Phosphoserine. At Tyr-225 the chain carries Phosphotyrosine. Phosphoserine is present on residues Ser-226 and Ser-238. Positions 245–254 (EKSESRRNLE) are enriched in basic and acidic residues. Ser-259 is modified (phosphoserine). Over residues 274–287 (VSKQSSSTNYTNEL) the composition is skewed to polar residues. Positions 294 to 303 (IKTHKLEQKE) are enriched in basic and acidic residues. 5 positions are modified to phosphoserine: Ser-339, Ser-346, Ser-358, Ser-365, and Ser-370. Positions 384-444 (ETCVECQKTV…KPHFNQLFKS (61 aa)) constitute an LIM zinc-binding domain. Lys-435 is modified (N6-succinyllysine). Phosphoserine is present on Ser-486. The tract at residues 489–509 (VEDAPIAKVGVLTASMEAKAS) is required for interaction with MYO5B. The disordered stretch occupies residues 508–726 (ASSQLEKEDK…TTQKQKSQDV (219 aa)). Positions 512-523 (LEKEDKPAETKK) are enriched in basic and acidic residues. The span at 533–542 (ELSSSGSALE) shows a compositional bias: low complexity. Basic and acidic residues predominate over residues 552 to 563 (WPPEDEVSKPEA). Ser-597, Ser-600, Ser-605, and Ser-613 each carry phosphoserine. Residues 627 to 637 (AERKQMEKASA) show a composition bias toward basic and acidic residues. Positions 638–651 (SEKNGSVGKTTWPS) are enriched in polar residues. Over residues 652–667 (KESRGGEAAGRSKEVQ) the composition is skewed to basic and acidic residues. The span at 691–721 (LQQQSPLEPKSKNWSSFADNTSAKEFTTQKQ) shows a compositional bias: polar residues. Phosphoserine occurs at positions 695, 723, and 738.

Interacts with NPC1L1; bridges NPC1L1 with MYO5B. Interacts with MYO5B; bridges MYO5B with NPC1L1. Interacts with PXN; this complex stabilizes actin dynamics. Interacts with F-actin and G-actin. Interacts with LUZP1 (via C-terminus); both proteins restrict ciliation and may work together to regulate this process. Binds RAB40B (GTP-bound); interaction influences LIMA1 subcellular localization in lamellipodia during cell migration. In terms of processing, phosphorylation of the C-terminal region by MAPK1/MAPK3 reduces its association with F-actin and contributes to actin filament reorganization and enhances cell motility. Post-translationally, ubiquitinated by the ECS(RAB40B) complex leading to its degradation. As to expression, widely expressed. Highest levels of isoform 2 are expressed in lung, spleen and small intestine. Isoform 2 is expressed at higher levels than isoform 1 in most tissues except liver, fat and kidney. Isoform 1 and isoform 2 are expressed at low levels in skeletal muscle, heart, stomach and lymph.

Its subcellular location is the cytoplasm. The protein resides in the cell junction. It is found in the focal adhesion. It localises to the cytoskeleton. The protein localises to the stress fiber. Its subcellular location is the cell membrane. The protein resides in the cell projection. It is found in the ruffle. It localises to the lamellipodium. Functionally, actin-binding protein involved in actin cytoskeleton regulation and dynamics. Increases the number and size of actin stress fibers and inhibits membrane ruffling. Inhibits actin filament depolymerization. Bundles actin filaments, delays filament nucleation and reduces formation of branched filaments. Acts as a negative regulator of primary cilium formation. Plays a role in cholesterol homeostasis. Influences plasma cholesterol levels through regulation of intestinal cholesterol absorption. May act as a scaffold protein by regulating NPC1L1 transportation, an essential protein for cholesterol absorption, to the plasma membrane by recruiting MYO5B to NPC1L1, and thus facilitates cholesterol uptake. The chain is LIM domain and actin-binding protein 1 from Sus scrofa (Pig).